Here is a 277-residue protein sequence, read N- to C-terminus: Type II restriction enzyme EcoRI (277 aa).

Residues D91, E111, and K113 contribute to the active site. Mg(2+) is bound by residues D91 and E111.

The protein belongs to the EcoRI type II restriction endonuclease family. In terms of assembly, homodimer. Mg(2+) serves as cofactor.

The enzyme catalyses Endonucleolytic cleavage of DNA to give specific double-stranded fragments with terminal 5'-phosphates.. A P subtype restriction enzyme that recognizes the double-stranded sequence 5'-GAATTC-3' and cleaves after G-1. The chain is Type II restriction enzyme EcoRI (ecoRIR) from Escherichia coli.